Consider the following 46-residue polypeptide: Esculentin-1GRa (46 aa).

As to expression, expressed by the skin glands.

The protein resides in the secreted. Antimicrobial peptide active against the Gram-positive bacterium S.aureus (MIC=12.5 uM) and against the Gram-negative bacterium E.coli (MIC=6 uM). Has no antifungal activity against C.albicans. Shows hemolytic activity against human erythrocytes only at high concentrations (LC(50)=210 uM). The chain is Esculentin-1GRa from Odorrana grahami (Yunnanfu frog).